We begin with the raw amino-acid sequence, 309 residues long: Pantothenate kinase (309 aa).

92–99 (GSVAVGKT) is an ATP binding site.

The protein belongs to the prokaryotic pantothenate kinase family.

The protein resides in the cytoplasm. The enzyme catalyses (R)-pantothenate + ATP = (R)-4'-phosphopantothenate + ADP + H(+). Its pathway is cofactor biosynthesis; coenzyme A biosynthesis; CoA from (R)-pantothenate: step 1/5. The protein is Pantothenate kinase (coaA) of Lactiplantibacillus plantarum (strain ATCC BAA-793 / NCIMB 8826 / WCFS1) (Lactobacillus plantarum).